The chain runs to 172 residues: Capsid protein (172 aa).

A disordered region spans residues 1 to 26 (MASKWNWSGTKGRRTPRRPYGRPYKS). Over residues 11 to 20 (KGRRTPRRPY) the composition is skewed to basic residues.

It belongs to the nanoviridae capsid protein family.

It localises to the virion. This chain is Capsid protein (DNA-S), found in Faba bean necrotic yellows virus (isolate Egyptian EV1-93) (FBNYV).